Consider the following 234-residue polypeptide: Biosynthetic peptidoglycan transglycosylase (234 aa).

Residues valine 8 to alanine 28 traverse the membrane as a helical segment.

This sequence belongs to the glycosyltransferase 51 family.

The protein localises to the cell inner membrane. It carries out the reaction [GlcNAc-(1-&gt;4)-Mur2Ac(oyl-L-Ala-gamma-D-Glu-L-Lys-D-Ala-D-Ala)](n)-di-trans,octa-cis-undecaprenyl diphosphate + beta-D-GlcNAc-(1-&gt;4)-Mur2Ac(oyl-L-Ala-gamma-D-Glu-L-Lys-D-Ala-D-Ala)-di-trans,octa-cis-undecaprenyl diphosphate = [GlcNAc-(1-&gt;4)-Mur2Ac(oyl-L-Ala-gamma-D-Glu-L-Lys-D-Ala-D-Ala)](n+1)-di-trans,octa-cis-undecaprenyl diphosphate + di-trans,octa-cis-undecaprenyl diphosphate + H(+). It functions in the pathway cell wall biogenesis; peptidoglycan biosynthesis. Peptidoglycan polymerase that catalyzes glycan chain elongation from lipid-linked precursors. The sequence is that of Biosynthetic peptidoglycan transglycosylase from Ralstonia nicotianae (strain ATCC BAA-1114 / GMI1000) (Ralstonia solanacearum).